The sequence spans 159 residues: Phosphopantetheine adenylyltransferase (159 aa).

T10 is a substrate binding site. Residues 10 to 11 (TF) and H18 contribute to the ATP site. Substrate contacts are provided by K42, M74, and R88. ATP is bound by residues 89–91 (GLR), E99, and 124–130 (WSFISSS).

Belongs to the bacterial CoaD family. In terms of assembly, homohexamer. It depends on Mg(2+) as a cofactor.

Its subcellular location is the cytoplasm. It catalyses the reaction (R)-4'-phosphopantetheine + ATP + H(+) = 3'-dephospho-CoA + diphosphate. Its pathway is cofactor biosynthesis; coenzyme A biosynthesis; CoA from (R)-pantothenate: step 4/5. Functionally, reversibly transfers an adenylyl group from ATP to 4'-phosphopantetheine, yielding dephospho-CoA (dPCoA) and pyrophosphate. The polypeptide is Phosphopantetheine adenylyltransferase (Cronobacter sakazakii (strain ATCC BAA-894) (Enterobacter sakazakii)).